The following is a 340-amino-acid chain: HTH-type transcriptional regulator PtxS (340 aa).

Residues 12 to 67 (VTINQVAEAAGVSKASVSRYIGGDRQLLADATARRIERAIDQLDYRPNQMARGLKR) form the HTH lacI-type domain. The segment at residues 14–33 (INQVAEAAGVSKASVSRYIG) is a DNA-binding region (H-T-H motif).

Interacts with PtxR in the absence of 2-ketogluconate. Binding of the 2-ketogluconate effector to PtxS causes PtxS/PtxR complex dissociation.

With respect to regulation, 2-ketogluconate acts as a molecular effector and causes dissociation of the PtxS/PtxR complex. Negatively regulates glucose metabolism by binding directly to the promoter region of the kgu and gad operons. It also negatively regulates its own synthesis. In terms of biological role, in addition, in pathogenic strains, PtxS modulates PtxR activity in response to 2-ketogluconate. In the presence of PtxR, which also binds to the kgu and gad promoter regions, PtxS and PtxR form a tight complex, creating a DNA-loop that prevents RNA polymerase promoter access and expression of the glucose metabolism genes. Binding of the 2-ketogluconate effector to PtxS causes PtxS/PtxR complex dissociation and leads to the dissolution of the repression DNA-loop, facilitating the entry of the RNA polymerase and enabling the transcription of the genes. Also plays an important role in the regulation of the expression of the virulence factor exotoxin A (toxA). PtxS does not bind directly to the toxA promoter but negatively regulates the production of exotoxin A by binding to PtxR and interfering with its positive regulator activity. In the presence of 2-ketogluconate, PtxS is released and PtxR can recruit RNA polymerase. This chain is HTH-type transcriptional regulator PtxS, found in Pseudomonas aeruginosa (strain ATCC 15692 / DSM 22644 / CIP 104116 / JCM 14847 / LMG 12228 / 1C / PRS 101 / PAO1).